The chain runs to 344 residues: Cathepsin B-like cysteine proteinase 5 (344 aa).

Positions 1–15 (MWKLSAILLVAAASA) are cleaved as a signal peptide. Positions 16–81 (VVIPGHREAP…DIVATEVSDA (66 aa)) are excised as a propeptide. 6 disulfides stabilise this stretch: Cys-95-Cys-124, Cys-107-Cys-154, Cys-143-Cys-213, Cys-144-Cys-150, Cys-183-Cys-217, and Cys-191-Cys-203. Cys-110 is a catalytic residue. Catalysis depends on residues His-286 and Asn-306.

The protein belongs to the peptidase C1 family.

The chain is Cathepsin B-like cysteine proteinase 5 (cpr-5) from Caenorhabditis elegans.